Reading from the N-terminus, the 187-residue chain is Protein GrpE (187 aa).

The segment at 1 to 23 is disordered; the sequence is MADEQNLDAQAQDQAAEAGAGEE. Positions 7-23 are enriched in low complexity; the sequence is LDAQAQDQAAEAGAGEE.

The protein belongs to the GrpE family. In terms of assembly, homodimer.

It is found in the cytoplasm. Participates actively in the response to hyperosmotic and heat shock by preventing the aggregation of stress-denatured proteins, in association with DnaK and GrpE. It is the nucleotide exchange factor for DnaK and may function as a thermosensor. Unfolded proteins bind initially to DnaJ; upon interaction with the DnaJ-bound protein, DnaK hydrolyzes its bound ATP, resulting in the formation of a stable complex. GrpE releases ADP from DnaK; ATP binding to DnaK triggers the release of the substrate protein, thus completing the reaction cycle. Several rounds of ATP-dependent interactions between DnaJ, DnaK and GrpE are required for fully efficient folding. The protein is Protein GrpE of Pseudomonas savastanoi pv. phaseolicola (strain 1448A / Race 6) (Pseudomonas syringae pv. phaseolicola (strain 1448A / Race 6)).